A 211-amino-acid chain; its full sequence is Thymidylate kinase (211 aa).

Position 12–19 (12–19) interacts with ATP; that stretch reads GIDGSGKS.

This sequence belongs to the thymidylate kinase family.

The catalysed reaction is dTMP + ATP = dTDP + ADP. Its function is as follows. Phosphorylation of dTMP to form dTDP in both de novo and salvage pathways of dTTP synthesis. The polypeptide is Thymidylate kinase (Ruegeria pomeroyi (strain ATCC 700808 / DSM 15171 / DSS-3) (Silicibacter pomeroyi)).